We begin with the raw amino-acid sequence, 320 residues long: MSTTPARLGTRRSTMATNQSRRVAEILTARTGVPVELVLITSFGDITRAHLTQLGGTGVFVSALRDALLAGEVEFAVHSLKDLPTAPTEGIVLAAVTERDDPRDALCARDGLKFADLPPGATVGTGSPRRVAQLAALRPDLRYVPIRGNAETRLGKVASGELDAVVLAYAGLHRVGRLDDVTDVFDVDQVLPAPGQGALAVECRTADFTGPLRYLTAVDHLPTRAAVTAERVILAELEAGCAAPVGAYAEFVAEDRLRLRAAVVATDGSQAVRAEQTVTVTEFPDAVQAATALGRQLAHDMIEQGADQIVADAAAGRGES.

Cys241 is subject to S-(dipyrrolylmethanemethyl)cysteine.

The protein belongs to the HMBS family. In terms of assembly, monomer. Requires dipyrromethane as cofactor.

It catalyses the reaction 4 porphobilinogen + H2O = hydroxymethylbilane + 4 NH4(+). It participates in porphyrin-containing compound metabolism; protoporphyrin-IX biosynthesis; coproporphyrinogen-III from 5-aminolevulinate: step 2/4. In terms of biological role, tetrapolymerization of the monopyrrole PBG into the hydroxymethylbilane pre-uroporphyrinogen in several discrete steps. The protein is Porphobilinogen deaminase of Thermobifida fusca (strain YX).